A 2567-amino-acid polypeptide reads, in one-letter code: MGSLGPDSQSRWASEPIAIIGMSSKFAGDATNTDKLWQMLAEGRSGWTEFPASRFRSEGVYHPNNERLNTTHVKGAHFLQEDVGLFDAAFFSYSSETASSLDPQYRLQLESAYEALENAGIPLTQIAGSNTSVFTGVFVHDYRDALLRDADNLPRLMATGTGVPMMSNRISHFFDLRGASMTIETACSSGMVATHQGIQSLRTGEADMSIVGGANLTLNPDMFKALGSAGFLSADGKSYAFDSRASGYGRGEGVATIVMKRLSDALAAGDPIRAVIRSSLLNQDGKTETITTPSLEAQIDLIRQCYARAGLDPRDTQYFEAHGTGTQAGDTVEARAIATVFSHNQDPLLIGSIKTNIGHTEAASGLASIIKTALALEKGVIPASINFEKPNPKLSLEDWHLKLVRQLQEWPAASTRRASINNFGYGGANAHIILEDGASWTPSPVEGTSSKEPIDTGSRVLVLSGKDEQACRTMISNLAEYLQRVASAEDEPSRLLDSLAYTLGQRRTRFPWVAAHPVPVTEGIGAVVNTLQSPKFKPYRSSRRPRIGMVFTGQGAQWWAMGRELRDAYPVYKASLDEADAYIRQFGADWSLVEELSRDAASSRINESGLSTPICVAVQISLVRLLESWGVVPAAVTSHSSGEIAAAYTVGALSYKDAMAYAYHRAVLAADTSLRGPVKGGMLAIGLGREDTEAYLKRLTTGGKAMVACVNSPSSTTVSGDLSAVQELEELANADGVFARLLKVETAWHSHHMTAIANVYVEALDNIKRKNSRNESSIAYSSPVTGGRVANIEEVARPEHWVKSLVQPVQFVDAFTDMVLGNPNGSANVDVVVEVGPHTALGGPIQQILALPAFKGLQIPYYGCLVRKADAKDTMQALAANLLQQGYPLDMDAVNFPHGRGSRVRVLTGLPSYPWNHQVKHWVEPRFNRALRERSVPPHHLLGSLVEGTNLEEPTWRHTLRISESPWTRDHAIQSNVVYPAAGYICLAIEATKQLHALNHTKAGAKEVSGYRLRDVDFLQALMIPDTSDGIEIQTSLRPVNDKDVAIQGWKHFEVWTVTGDNRWTQHAKGLISIEFEASAQVYEPKLGEFTIKGYKRQIPPAQLFANLKALGIGHGPVFQNMSHIVQSGFDRRSVVLTTVPDTSVPNDLPREHVLHPVTLDSFITSPYSAVPGAAGRETAAKVPRSVKSFWVSSNISHSPEHVFKAHSHIIRDDKHGMEADVIVANDGVDDNNVLLEMKGFSYQSLGRSVSLQHTEPWESQLCSSIHWRPDISIKLPATVSLVKQELSSNSNSAEAGGVEISSLCLYFIQKALASLSDSDFTNGSHYSKYYAWMKSAAQQAAITDIDEEHIDQIAKAQADGEMIRLLGKQLVSILRGQSTPTEIMEQDKNLLSRFYSETPRAKRTSSQLSGLLRHLVHKNPRARILEIGASTGGITGSALGVLDTATSGGPHASLYHYTDLSDRNFDAAREGFAAWSDILAFDVLDIERDPADQGFTVGSYDVVIASHAFSSTSSAIAGVLENVRSLLKPGGTLLFTEDFKPSIDVQFVKGLFPSWWSSERFSEQHVEPSPLLSVPLWDRSLRHAGFTGIDIELRDSDDVDASVSATIMSTLPPHPAGQSDIDAGKVVIVTSEQAGIPPSEWLKALQHSIASYSKAVNGAEGKVLPSVQSIESAAATAAWYADKICIFIGEINEPILYNLDAASLEGIKAMSTGCKGLLWVTRGGAVDCERPEVSLATGFVRTLRNEYVGRKFITLDLSPKGSLWQESGHEAIAQVLQNAFGQSLPGHSSGPDKGPVELEYAERDGVILIPRVYHDVAKDNAITPKTLESEEDTQGITTVEPFYQQHRPLCFLPELLVFGDDASAAVYRDTLPPRLVEIMPRAYGAGLNPADRTITGQECSGIITRVGIEASKHGYSVGDRVVCLLQQSSFTSRAVVDWTSVVQMPSRLSFQQAASLPAAFLVAYFSLVETARLKTSQSVLIHNAAGSIGQAAIMVAKHIGATVFTTVASPKQRDLLTREHGIPSHQIFDSNNASFGTAVTAATNGRGVDVVLNSLTGPLLQTSFNLVAPLGHFIEVGKYDSLANSNLEMLPFTRGVSFSAVDVPSLLQHRGSDVHRCLEEVMRLFELEALAPVSPVIEHNIGDIAQVSRLIQTEEETGKRVLSVAQDEMVSVLPHTAPAATLSPDASYLIVGGNGGLGQAVAHWMVSRGAKNLVLLSRSAGQSPKMAVLAEELRDAGCHRVLPVSCDVAKEDDLARAMDTCAREGLPPIRGVVHAAFVLHDSFVENMTLDDYKYTIQSKVSGAWNLHNQFNLPGDLDFFVLFSSINGILGYASQAAYSAAGAYEDALAHWRVKHKGLPAVSIDLSLVDGVGYVAEASAAEAMRKSLIKAGRRVINEEQVLASLELAIVSPYDPQFILGGINSGPGPHWDVDGDLGRDMRLLALKYRQPAAADGHDDEDSKAANGGDSLSAKIASASSRDEAISVVGSAVAAMLADMFLVSVEEVDLNDSPSQQGIDSLVAVEVRNMLFSQAGAELSIFNIMQSPSLAQLVANVVDRSTFAKFAKSS.

Residues 14-436 (SEPIAIIGMS…GANAHIILED (423 aa)) enclose the Ketosynthase family 3 (KS3) domain. Active-site for beta-ketoacyl synthase activity residues include Cys187, His322, and His359. The segment at 550–841 (VFTGQGAQWW…VVEVGPHTAL (292 aa)) is malonyl-CoA:ACP transacylase (MAT) domain. The tract at residues 939 to 1079 (HHLLGSLVEG…GLISIEFEAS (141 aa)) is N-terminal hotdog fold. Residues 939–1249 (HHLLGSLVEG…GFSYQSLGRS (311 aa)) are dehydratase (DH) domain. The region spanning 939 to 1252 (HHLLGSLVEG…YQSLGRSVSL (314 aa)) is the PKS/mFAS DH domain. His971 (proton acceptor; for dehydratase activity) is an active-site residue. The tract at residues 1095-1252 (YKRQIPPAQL…YQSLGRSVSL (158 aa)) is C-terminal hotdog fold. The active-site Proton donor; for dehydratase activity is Asp1161. The segment at 1426–1534 (LEIGASTGGI…RSLLKPGGTL (109 aa)) is methyltransferase (CMet) domain. The tract at residues 1852 to 2163 (FLPELLVFGD…TEEETGKRVL (312 aa)) is enoyl reductase (ER) domain. Residues 2187–2369 (ASYLIVGGNG…AVSIDLSLVD (183 aa)) form a ketoreductase (KR) domain region. The region spanning 2481-2558 (EAISVVGSAV…QLVANVVDRS (78 aa)) is the Carrier domain. The residue at position 2518 (Ser2518) is an O-(pantetheine 4'-phosphoryl)serine.

Its pathway is secondary metabolite biosynthesis. Highly reducing polyketide synthase; part of the SOR gene cluster that mediates the biosynthesis of sorbicillinoids, a diverse group of yellow secondary metabolites that restrict growth of competing pathogenic fungi but not of bacteria. Sorbicillinoids biosynthesis requires the action of two PKSs. The SOR cluster is required for the production of trichodimerol and dihydrotrichotetronin, with sor2 being sufficient for production of trichodimerol, but not dihydrotrichotetronin in the light. Sor1 iteratively combines three acetyl units and the growing chain is modified by the ketoacyl reductase subunit, and optional by the enoyl reductase subunit in the second cycle. The polyketide is then handed over to the PKS sor2, which adds three more acetyl units, and two methyl groups. Sor2 releases an aldehyde, which undergoes spontaneous cyclization resulting in the formation of sorbicillin or 2',3'-dihydrosorbicillin. The monooxygenase sor5 oxidizes sorbicillin and 2',3'-dihydrosorbicillin to 2',3'-dihydrosorbicillinol and sorbicillinol, respectively. The oxidoreductase sor8 further converts sorbicillinol into oxosorbicillinol. Sorbicillinol is the building block for the other sorbicillinoids such as disorbicillinol, bisvertinolon, dihydrobisvertinolone, and dihydrotrichotetronine. In Hypocrea jecorina (strain QM6a) (Trichoderma reesei), this protein is Highly reducing polyketide synthase sor1.